The primary structure comprises 318 residues: Methionyl-tRNA formyltransferase (318 aa).

Serine 110–proline 113 provides a ligand contact to (6S)-5,6,7,8-tetrahydrofolate.

The protein belongs to the Fmt family.

The catalysed reaction is L-methionyl-tRNA(fMet) + (6R)-10-formyltetrahydrofolate = N-formyl-L-methionyl-tRNA(fMet) + (6S)-5,6,7,8-tetrahydrofolate + H(+). Attaches a formyl group to the free amino group of methionyl-tRNA(fMet). The formyl group appears to play a dual role in the initiator identity of N-formylmethionyl-tRNA by promoting its recognition by IF2 and preventing the misappropriation of this tRNA by the elongation apparatus. This is Methionyl-tRNA formyltransferase from Lacticaseibacillus casei (strain BL23) (Lactobacillus casei).